A 188-amino-acid polypeptide reads, in one-letter code: GMP synthase [glutamine-hydrolyzing] subunit A (188 aa).

Positions 3-188 constitute a Glutamine amidotransferase type-1 domain; sequence PLYVVNNYGQ…FSICTGQNKG (186 aa). The active-site Nucleophile is cysteine 75. Active-site residues include histidine 162 and glutamate 164.

In terms of assembly, heterodimer composed of a glutamine amidotransferase subunit (A) and a GMP-binding subunit (B).

The catalysed reaction is XMP + L-glutamine + ATP + H2O = GMP + L-glutamate + AMP + diphosphate + 2 H(+). It functions in the pathway purine metabolism; GMP biosynthesis; GMP from XMP (L-Gln route): step 1/1. In terms of biological role, catalyzes the synthesis of GMP from XMP. The polypeptide is GMP synthase [glutamine-hydrolyzing] subunit A (Methanospirillum hungatei JF-1 (strain ATCC 27890 / DSM 864 / NBRC 100397 / JF-1)).